Reading from the N-terminus, the 312-residue chain is Taste receptor type 2 member 140 (312 aa).

The Extracellular segment spans residues 1–9; it reads MKVTVECAL. Residues 10–30 traverse the membrane as a helical segment; it reads LITLIVEIIIGCLGNGFIAVV. Residues 31-46 are Cytoplasmic-facing; it reads NIMDWTKRRRFSLVDQ. The chain crosses the membrane as a helical span at residues 47–67; that stretch reads ILTALAISRLAFVWSLLTVLV. At 68-87 the chain is on the extracellular side; it reads ISELHSSLLITRKMLRIINN. A helical membrane pass occupies residues 88 to 108; it reads FWTVTNHFSIWLATCLSIFYF. At 109–133 the chain is on the cytoplasmic side; it reads LKIANFSNSIFLSLRWRVKTVVSLT. Residues 134-154 form a helical membrane-spanning segment; sequence LLVSLLLLLVNVIIINTCIVI. Over 155-185 the chain is Extracellular; the sequence is SVEGYKVNMSYSSHFNNNPQISRIPLFTNTM. The N-linked (GlcNAc...) asparagine glycan is linked to Asn162. A helical transmembrane segment spans residues 186–206; that stretch reads FTFIPFTVTLTIFLLLIFSLW. The Cytoplasmic segment spans residues 207–229; sequence RHLKKMQHRAKGPRDPSTTAHIK. Residues 230–250 form a helical membrane-spanning segment; that stretch reads ALQMVVTFLFLYTIFFLALVM. The Extracellular portion of the chain corresponds to 251–264; sequence QAWNNEIQSKTVFN. The chain crosses the membrane as a helical span at residues 265–285; that stretch reads LVFESIALAFPSGHSCVLILG. Residues 286-312 are Cytoplasmic-facing; the sequence is NSKLRQAFLTIIWWLRSSFNAAELSSP.

The protein belongs to the G-protein coupled receptor T2R family.

Its subcellular location is the membrane. Putative taste receptor which may play a role in the perception of bitterness. This Rattus norvegicus (Rat) protein is Taste receptor type 2 member 140.